Here is a 344-residue protein sequence, read N- to C-terminus: MGQYTINLRESYPVWKIGSKIDSTKEECLDYMLFIASPLLAGQATTLGVAIRRTLLESIQGTAIVAAKIYGAAHEYSTLEGIQESIHDILLNLKQVIIKNKICEFQKCLISIIGPKKVTAADIELSQNITISNPYHHIATITKPIRFQVELIINKGRGYLIQDGNDVQDGYFPVDALFNPVRNVNFSIHNLAEQQEALILEIWTNGAITPLDALRQGSENLIHLFLPPFGLEDDTYMTSLGSQDYNIHIKNSLKEKFELHSIERIEDSHLIKDQFLEYSKTPIELLELSTRPFKCLKNANIYTINDLLKLSQQDLLKISNMGPSSVKQIVEALDKRFGINLKLK.

The segment at 1–232 (MGQYTINLRE…HLFLPPFGLE (232 aa)) is alpha N-terminal domain (alpha-NTD). The tract at residues 270-344 (LIKDQFLEYS…KRFGINLKLK (75 aa)) is alpha C-terminal domain (alpha-CTD).

Belongs to the RNA polymerase alpha chain family. In terms of assembly, in plastids the minimal PEP RNA polymerase catalytic core is composed of four subunits: alpha, beta, beta', and beta''. When a (nuclear-encoded) sigma factor is associated with the core the holoenzyme is formed, which can initiate transcription.

The protein localises to the plastid. Its subcellular location is the chloroplast. The catalysed reaction is RNA(n) + a ribonucleoside 5'-triphosphate = RNA(n+1) + diphosphate. Functionally, DNA-dependent RNA polymerase catalyzes the transcription of DNA into RNA using the four ribonucleoside triphosphates as substrates. The chain is DNA-directed RNA polymerase subunit alpha from Spirogyra maxima (Green alga).